Reading from the N-terminus, the 687-residue chain is A-kinase anchor protein 8 (687 aa).

The tract at residues 1–195 (MEQSYGGYGA…FLRGRGQGRF (195 aa)) is interaction with MCM2. The interval 1–210 (MEQSYGGYGA…SSTFIRSDPF (210 aa)) is interaction with DPY30. Phosphoserine is present on serine 72. Residues 104–124 (SKEGGRGGISSGGEGMQDRDS) form a disordered region. Position 109 is an asymmetric dimethylarginine; alternate (arginine 109). An Omega-N-methylarginine; alternate modification is found at arginine 109. The segment covering 109–118 (RGGISSGGEG) has biased composition (gly residues). Residues 109–201 (RGGISSGGEG…QGRFQDRSNS (93 aa)) form an interaction with DDX5 region. Residues 127–152 (RFQPYESYDSRPCMPEHTPYRPSYSY) form a nuclear matrix targeting site region. The interval 189–221 (GRGQGRFQDRSNSSTFIRSDPFMPPSASSEPLS) is disordered. Serine 199 is modified (phosphoserine). An omega-N-methylarginine mark is found at arginine 233 and arginine 277. Residues 278–380 (SQTRIRDWPR…KQRRRDRMRD (103 aa)) are disordered. Basic and acidic residues-rich tracts occupy residues 281-295 (RIRDWPRRRGFERFG) and 312-321 (PDAKLARADS). A Bipartite nuclear localization signal motif is present at residues 287 to 304 (RRRGFERFGPDNMGRKRK). A Glycyl lysine isopeptide (Lys-Gly) (interchain with G-Cter in SUMO2) cross-link involves residue lysine 315. Phosphoserine is present on residues serine 321, serine 326, and serine 337. The span at 322-332 (EGDLSENDDGA) shows a compositional bias: acidic residues. Positions 336 to 358 (RSGDEEFRGEDDLCDSRKQRGEK) are enriched in basic and acidic residues. Residues 385–448 (RIQFACSVCK…NKKIEKRRQE (64 aa)) are involved in chromatin-binding. 2 consecutive C2H2 AKAP95-type zinc fingers follow at residues 390–412 (CSVCKFRSFEDEEIQKHLQSKFH) and 479–502 (CLACDMLIPAQHQLLQRHLHSVDH). The tract at residues 523 to 565 (SVLNNKHIVKMLEKYLKGEDPFVNETADLETEGDENLGEEKET) is involved in condensin complex recruitment. At threonine 553 the chain carries Phosphothreonine. Lysine 563 participates in a covalent cross-link: Glycyl lysine isopeptide (Lys-Gly) (interchain with G-Cter in SUMO2). The interval 568 to 585 (EVAAEVLAEVITAAVKAV) is RII-binding. Positions 572–589 (EVLAEVITAAVKAVEGDG) are required for interaction with MYCBP. The tract at residues 606–687 (VDTAEAGSDS…DAEAKDTPTE (82 aa)) is disordered. Residues 633–648 (RNMEDMARGEAAEARN) show a composition bias toward basic and acidic residues. A compositionally biased stretch (low complexity) spans 649–666 (EAAVPAAAAGSPVPVIAI). Serine 659 carries the post-translational modification Phosphoserine.

This sequence belongs to the AKAP95 family. Binds to dimeric RII-alpha regulatory subunit of PKA during mitosis. Interacts (via C-terminus) with FIGN. Interacts with NCAPD2, CCND1, CCND3, MCM2, RPS6KA1, PDE4A, CASP3. Interacts with DDX5, CCNE1. Interacts with NFKB1; detetcted in the cytoplasm. Interacts with MYCBP; MYCBP is translocated to the nucleus and the interaction prevents the association of the PKA catalytic subunit leading to suppression of PKA activity. Interacts with DPY30; mediating AKAP8 association with at least the MLL4/WBP7 HMT complex. Interacts with HDAC3; increased during mitosis. Interacts with GJA1; in the nucleus and in the nuclear membrane; the nuclear association increases with progress of cell cycle G1, S and G2 phase and decreases in M phase. In terms of processing, phosphorylated on tyrosine residues probably by SRC subfamily protein kinases; multiple phosphorylation is leading to dissociation from nuclear structures implicated in chromatin structural changes. In terms of tissue distribution, widely expressed. The protein has been detected in liver, fibroblasts, granulosa, myoblast, lymphoma and Sertoli cells.

It is found in the nucleus matrix. The protein resides in the nucleus. It localises to the nucleolus. Its subcellular location is the cytoplasm. Its function is as follows. Anchoring protein that mediates the subcellular compartmentation of cAMP-dependent protein kinase (PKA type II). Acts as an anchor for a PKA-signaling complex onto mitotic chromosomes, which is required for maintenance of chromosomes in a condensed form throughout mitosis. Recruits condensin complex subunit NCAPD2 to chromosomes required for chromatin condensation; the function appears to be independent from PKA-anchoring. May help to deliver cyclin D/E to CDK4 to facilitate cell cycle progression. Required for cell cycle G2/M transition and histone deacetylation during mitosis. In mitotic cells recruits HDAC3 to the vicinity of chromatin leading to deacetylation and subsequent phosphorylation at 'Ser-10' of histone H3; in this function may act redundantly with AKAP8L. Involved in nuclear retention of RPS6KA1 upon ERK activation thus inducing cell proliferation. May be involved in regulation of DNA replication by acting as scaffold for MCM2. Enhances HMT activity of the KMT2 family MLL4/WBP7 complex and is involved in transcriptional regulation. In a teratocarcinoma cell line is involved in retinoic acid-mediated induction of developmental genes implicating H3 'Lys-4' methylation. May be involved in recruitment of active CASP3 to the nucleus in apoptotic cells. May act as a carrier protein of GJA1 for its transport to the nucleus. May play a repressive role in the regulation of rDNA transcription. Preferentially binds GC-rich DNA in vitro. In cells, associates with ribosomal RNA (rRNA) chromatin, preferentially with rRNA promoter and transcribed regions. Involved in modulation of Toll-like receptor signaling. Required for the cAMP-dependent suppression of TNF-alpha in early stages of LPS-induced macrophage activation; the function probably implicates targeting of PKA to NFKB1. This is A-kinase anchor protein 8 (Akap8) from Rattus norvegicus (Rat).